The following is a 289-amino-acid chain: Agmatinase (289 aa).

Mn(2+) contacts are provided by His112, Asp135, His137, Asp139, Asp216, and Asp218.

Belongs to the arginase family. Agmatinase subfamily. Requires Mn(2+) as cofactor.

It catalyses the reaction agmatine + H2O = urea + putrescine. The protein operates within amine and polyamine biosynthesis; putrescine biosynthesis via agmatine pathway; putrescine from agmatine: step 1/1. In terms of biological role, catalyzes the formation of putrescine from agmatine. The protein is Agmatinase (speB) of Halalkalibacterium halodurans (strain ATCC BAA-125 / DSM 18197 / FERM 7344 / JCM 9153 / C-125) (Bacillus halodurans).